The chain runs to 372 residues: Glutamine synthetase (372 aa).

The region spanning 24–103 is the GS beta-grasp domain; it reads VIAEYVWVDG…VLAECFNSDG (80 aa). The GS catalytic domain occupies 110–372; it reads HRHEANKLFQ…KEYERETNEQ (263 aa).

It belongs to the glutamine synthetase family. As to quaternary structure, homooctamer.

Its subcellular location is the cytoplasm. The catalysed reaction is L-glutamate + NH4(+) + ATP = L-glutamine + ADP + phosphate + H(+). The protein is Glutamine synthetase (GLN1) of Candida glabrata (strain ATCC 2001 / BCRC 20586 / JCM 3761 / NBRC 0622 / NRRL Y-65 / CBS 138) (Yeast).